The chain runs to 272 residues: Sordarin/hypoxysordarin biosynthesis cluster protein P (272 aa).

2 N-linked (GlcNAc...) asparagine glycosylation sites follow: Asn6 and Asn23. 2 helical membrane passes run 31–51 and 67–87; these read FLAS…LLFL and AYHM…VDLA. Asn208 carries N-linked (GlcNAc...) asparagine glycosylation.

It localises to the membrane. The protein operates within antibiotic biosynthesis. Functionally, part of the gene cluster that mediates the biosynthesis of sordarin and hypoxysordarin, glycoside antibiotics with a unique tetracyclic diterpene aglycone structure. First, the geranylgeranyl diphosphate synthase sdnC constructs GGDP from farnesyl diphosphate and isopentenyl diphosphate. The diterpene cyclase sdnA then catalyzes the cyclization of GGDP to afford cycloaraneosene. Cycloaraneosene is then hydroxylated four times by the putative cytochrome P450 monooxygenases sdnB, sdnE, sdnF and sdnH to give a hydroxylated cycloaraneosene derivative such as cycloaraneosene-8,9,13,19-tetraol. Although the order of the hydroxylations is unclear, at least C8, C9 and C13 of the cycloaraneosene skeleton are hydroxylated before the sordaricin formation. Dehydration of the 13-hydroxy group of the hydroxylated cycloaraneosene derivative might be catalyzed by an unassigned hypothetical protein such as sdnG and sdnP to construct the cyclopentadiene moiety. The FAD-dependent oxidoreductase sdnN is proposed to catalyze the oxidation at C9 of the hydroxylated cycloaraneosene derivative and also catalyze the Baeyer-Villiger oxidation to give the lactone intermediate. The presumed lactone intermediate would be hydrolyzed to give an acrolein moiety and a carboxylate moiety. Then, [4+2]cycloaddition would occur between the acrolein moiety and the cyclopentadiene moiety to give sordaricin. SdnN might also be involved in the [4+2]cycloaddition after the hypothesized oxidation to accommodate the oxidized product and prompt the [4+2]cycloaddition. GDP-6-deoxy-D-altrose may be biosynthesized from GDP-D-mannose by the putative GDP-mannose-4,6-dehydratase sdnI and the short-chain dehydrogenase sdnK. The glycosyltransferase sdnJ catalyzes the attachment of 6-deoxy-D-altrose onto the 19-hydroxy group of sordaricin to give 4'-O-demethylsordarin. The methyltransferase sdnD would complete the biosynthesis of sordarin. Sordarin can be further modified into hypoxysordarin. The unique acyl chain at the 3'-hydroxy group of hypoxysordarin would be constructed by an iterative type I PKS sdnO and the trans-acting polyketide methyltransferase sdnL. SdnL would be responsible for the introduction of an alpha-methyl group of the polyketide chain. Alternatively, the beta-lactamase-like protein sdnR might be responsible for the cleavage and transfer of the polyketide chain from the PKS sdnO to sordarin. Two putative cytochrome P450 monooxygenases, sdnQ and sdnT, might catalyze the epoxidations of the polyketide chain to complete the biosynthesis of hypoxysordarin. Transcriptional regulators sdnM and sdnS are presumably encoded for the transcriptional regulation of the expression of the sdn gene cluster. The sequence is that of Sordarin/hypoxysordarin biosynthesis cluster protein P from Sordaria araneosa (Pleurage araneosa).